A 190-amino-acid polypeptide reads, in one-letter code: Orotate phosphoribosyltransferase (190 aa).

114 to 122 (EDVVTTGGS) is a 5-phospho-alpha-D-ribose 1-diphosphate binding site. Positions 118 and 146 each coordinate orotate.

It belongs to the purine/pyrimidine phosphoribosyltransferase family. PyrE subfamily. As to quaternary structure, homodimer. The cofactor is Mg(2+).

It carries out the reaction orotidine 5'-phosphate + diphosphate = orotate + 5-phospho-alpha-D-ribose 1-diphosphate. It participates in pyrimidine metabolism; UMP biosynthesis via de novo pathway; UMP from orotate: step 1/2. Its function is as follows. Catalyzes the transfer of a ribosyl phosphate group from 5-phosphoribose 1-diphosphate to orotate, leading to the formation of orotidine monophosphate (OMP). This is Orotate phosphoribosyltransferase from Caldanaerobacter subterraneus subsp. tengcongensis (strain DSM 15242 / JCM 11007 / NBRC 100824 / MB4) (Thermoanaerobacter tengcongensis).